Consider the following 210-residue polypeptide: Claudin-4 (210 aa).

The Cytoplasmic portion of the chain corresponds to 1–7 (MASMGLQ). The interaction with EPHA2 stretch occupies residues 1-103 (MASMGLQVMG…GVLLSVVGGK (103 aa)). The helical transmembrane segment at 8–28 (VMGIALAVLGWLGAILSCALP) threads the bilayer. Over 29–81 (MWRVTAFIGSNIVTSQTIWEGLWMNCVVQSTGQMQCKVYDSLLALPQDLQAAR) the chain is Extracellular. A disulfide bridge connects residues C54 and C64. The helical transmembrane segment at 82 to 102 (ALMVVSIILAALGVLLSVVGG) threads the bilayer. The Cytoplasmic segment spans residues 103–117 (KCTNCVEDESAKAKT). Residues 118 to 138 (MIVAGVVFLLAGLLVMVPASW) form a helical membrane-spanning segment. Over 139 to 160 (TANNIIRDFYNPLVVSGQKREM) the chain is Extracellular. Residues 161–181 (GASLYVGWAASGLLLLGGALL) traverse the membrane as a helical segment. The Cytoplasmic segment spans residues 182 to 210 (CCNCPPRADKPYSAKYSAAARSAPASNYV). Residue Y209 is modified to Phosphotyrosine. The interactions with TJP1, TJP2 and TJP3 stretch occupies residues 209–210 (YV).

This sequence belongs to the claudin family. Can form heteropolymeric strands with other claudins. Interacts with CLDN8. Interacts with CLDN1. Directly interacts with TJP1/ZO-1. Interacts with TJP2/ZO-2 and TJP3/ZO-3. Interacts with EPHA2; phosphorylates CLDN4 and may regulate tight junctions. In terms of processing, phosphorylated. Phosphorylation by EPHA2 is stimulated by EFNA1 and alters interaction with TJP1.

The protein resides in the cell junction. It is found in the tight junction. Its subcellular location is the cell membrane. The catalysed reaction is chloride(in) = chloride(out). It catalyses the reaction bromide(in) = bromide(out). It carries out the reaction iodide(out) = iodide(in). The enzyme catalyses fluoride(in) = fluoride(out). Functionally, can associate with other claudins to regulate tight junction structural and functional strand dynamics. May coassemble with CLDN8 into tight junction strands containing anion-selective channels that convey paracellular chloride permeability in renal collecting ducts. May integrate into CLDN3 strands to modulate localized tight junction barrier properties. May disrupt strand assembly of channel-forming CLDN2 and CLDN15 and inhibit cation conductance. Cannot form tight junction strands on its own. The sequence is that of Claudin-4 (CLDN4) from Canis lupus familiaris (Dog).